The chain runs to 423 residues: Histidine--tRNA ligase (423 aa).

It belongs to the class-II aminoacyl-tRNA synthetase family. In terms of assembly, homodimer.

It localises to the cytoplasm. The catalysed reaction is tRNA(His) + L-histidine + ATP = L-histidyl-tRNA(His) + AMP + diphosphate + H(+). The sequence is that of Histidine--tRNA ligase from Staphylococcus haemolyticus (strain JCSC1435).